Consider the following 158-residue polypeptide: Small ribosomal subunit protein uS17 (158 aa).

Alanine 2 carries the N-acetylalanine modification. Position 22 is a citrulline (arginine 22). N6-acetyllysine occurs at positions 38, 45, and 58. Residue cysteine 60 is the site of S-palmitoyl cysteine attachment. Serine 67 is subject to Phosphoserine. Arginine 69 is subject to Omega-N-methylarginine. The residue at position 110 (serine 110) is a Phosphoserine.

This sequence belongs to the universal ribosomal protein uS17 family. As to quaternary structure, component of the small ribosomal subunit. Part of the small subunit (SSU) processome, composed of more than 70 proteins and the RNA chaperone small nucleolar RNA (snoRNA) U3. In terms of processing, citrullinated by PADI4.

The protein resides in the cytoplasm. It is found in the nucleus. It localises to the nucleolus. Component of the small ribosomal subunit. The ribosome is a large ribonucleoprotein complex responsible for the synthesis of proteins in the cell. Part of the small subunit (SSU) processome, first precursor of the small eukaryotic ribosomal subunit. During the assembly of the SSU processome in the nucleolus, many ribosome biogenesis factors, an RNA chaperone and ribosomal proteins associate with the nascent pre-rRNA and work in concert to generate RNA folding, modifications, rearrangements and cleavage as well as targeted degradation of pre-ribosomal RNA by the RNA exosome. This is Small ribosomal subunit protein uS17 (Rps11) from Mus musculus (Mouse).